The chain runs to 696 residues: Two-component response regulator ORR22 (696 aa).

Residues 27–142 form the Response regulatory domain; the sequence is RVLAVDDDPV…ELRNIWQHVV (116 aa). At aspartate 78 the chain carries 4-aspartylphosphate. The disordered stretch occupies residues 154–214; sequence LDFSKECNKP…DYQENDEPSA (61 aa). Residues 176–185 show a composition bias toward polar residues; the sequence is TCGSSDQNGR. Over residues 195 to 211 the composition is skewed to acidic residues; the sequence is GEDDDEGDDNDYQENDE. The myb-like GARP DNA-binding region spans 214 to 273; it reads AAKKPRVVWSVELHRKFVAAVNQLGIDKAVPKRILELMNVEKLTRENVASHLQKYRLYLK.

Belongs to the ARR family. Type-B subfamily. Post-translationally, two-component system major event consists of a His-to-Asp phosphorelay between a sensor histidine kinase (HK) and a response regulator (RR). In plants, the His-to-Asp phosphorelay involves an additional intermediate named Histidine-containing phosphotransfer protein (HPt). This multistep phosphorelay consists of a His-Asp-His-Asp sequential transfer of a phosphate group between first a His and an Asp of the HK protein, followed by the transfer to a conserved His of the HPt protein and finally the transfer to an Asp in the receiver domain of the RR protein.

Its subcellular location is the nucleus. Functionally, transcriptional activator that binds specific DNA sequence. Functions as a response regulator involved in His-to-Asp phosphorelay signal transduction system. Phosphorylation of the Asp residue in the receiver domain activates the ability of the protein to promote the transcription of target genes. May directly activate some type-A response regulators in response to cytokinins. In Oryza sativa subsp. indica (Rice), this protein is Two-component response regulator ORR22.